We begin with the raw amino-acid sequence, 415 residues long: Tyrosine--tRNA ligase (415 aa).

A 'HIGH' region motif is present at residues proline 54–histidine 63. Residues lysine 248–serine 252 carry the 'KMSKS' region motif. An ATP-binding site is contributed by lysine 251. Residues alanine 351–threonine 415 form the S4 RNA-binding domain.

This sequence belongs to the class-I aminoacyl-tRNA synthetase family. TyrS type 2 subfamily. Homodimer.

It localises to the cytoplasm. It catalyses the reaction tRNA(Tyr) + L-tyrosine + ATP = L-tyrosyl-tRNA(Tyr) + AMP + diphosphate + H(+). Its function is as follows. Catalyzes the attachment of tyrosine to tRNA(Tyr) in a two-step reaction: tyrosine is first activated by ATP to form Tyr-AMP and then transferred to the acceptor end of tRNA(Tyr). The protein is Tyrosine--tRNA ligase of Prochlorococcus marinus (strain NATL2A).